A 179-amino-acid chain; its full sequence is Signal peptidase complex subunit 2 (179 aa).

Residues 1-48 are Cytoplasmic-facing; that stretch reads MSGNNVQEEDSTFHVSNLYSETEIKKITQDFISEKIREQNFEEIVKYS. A helical transmembrane segment spans residues 49–69; the sequence is NIRIFLSLVLIVIGTYCSIFV. At 70–74 the chain is on the extracellular side; the sequence is QYKKN. The chain crosses the membrane as a helical span at residues 75 to 95; it reads PVIMIQLLVAFFVVSTTLIIF. Over 96–179 the chain is Cytoplasmic; sequence EYFFFDDVFM…AHGRTLKLKN (84 aa).

The protein belongs to the SPCS2 family. Component of the signal peptidase complex (SPC) composed of a catalytic subunit SEC11/SPC21 and three accessory subunits SPC25, SPC3/SPC22, SPC1/SPC12. The complex induces a local thinning of the ER membrane which is used to measure the length of the signal peptide (SP) h-region of protein substrates. This ensures the selectivity of the complex towards h-regions shorter than 18-20 amino acids. Within the complex, interacts with SEC11/SPC21. Component of a complex composed of SPC25 and PMV; the interaction is mediated via the transmembrane domains. The complex interacts with the SEC61 channel-forming translocon complex and is involved in the recognition and import of PEXEL motif-containing proteins into the ER for subsequent export.

The protein localises to the endoplasmic reticulum membrane. In terms of biological role, component of the signal peptidase complex (SPC) which catalyzes the cleavage of N-terminal signal sequences from nascent proteins as they are translocated into the lumen of the endoplasmic reticulum. Enhances the enzymatic activity of SPC and facilitates the interactions between different components of the translocation site. Also, regulatory component of the CSP25-plasmepsin PMV complex which cleaves the pentameric localization motif RxLxE/Q/D (termed Plasmodium export element (PEXEL)) located downstream of the N-terminal secretory signal sequence of several proteins. In Plasmodium falciparum (isolate 3D7), this protein is Signal peptidase complex subunit 2.